Reading from the N-terminus, the 445-residue chain is Vacuolar fusion protein CCZ1 homolog (445 aa).

The protein belongs to the CCZ1 family.

In Dictyostelium discoideum (Social amoeba), this protein is Vacuolar fusion protein CCZ1 homolog.